The sequence spans 321 residues: Acetyl-coenzyme A carboxylase carboxyl transferase subunit beta, chloroplastic (321 aa).

Residues 47–321 (LWAQCDNCEN…FWFYVLRSSL (275 aa)) enclose the CoA carboxyltransferase N-terminal domain. Positions 51, 54, 70, and 73 each coordinate Zn(2+). Residues 51 to 73 (CDNCENLLYLRFLRENQSVCKEC) form a C4-type zinc finger.

This sequence belongs to the AccD/PCCB family. Acetyl-CoA carboxylase is a heterohexamer composed of biotin carboxyl carrier protein, biotin carboxylase and 2 subunits each of ACCase subunit alpha and ACCase plastid-coded subunit beta (accD). Zn(2+) serves as cofactor.

It is found in the plastid. It localises to the chloroplast stroma. The enzyme catalyses N(6)-carboxybiotinyl-L-lysyl-[protein] + acetyl-CoA = N(6)-biotinyl-L-lysyl-[protein] + malonyl-CoA. Its pathway is lipid metabolism; malonyl-CoA biosynthesis; malonyl-CoA from acetyl-CoA: step 1/1. In terms of biological role, component of the acetyl coenzyme A carboxylase (ACC) complex. Biotin carboxylase (BC) catalyzes the carboxylation of biotin on its carrier protein (BCCP) and then the CO(2) group is transferred by the transcarboxylase to acetyl-CoA to form malonyl-CoA. The sequence is that of Acetyl-coenzyme A carboxylase carboxyl transferase subunit beta, chloroplastic from Pinus thunbergii (Japanese black pine).